The sequence spans 230 residues: Heptaprenylglyceryl phosphate synthase (230 aa).

Residue Lys12 participates in sn-glycerol 1-phosphate binding. Residues Asp14 and Thr40 each contribute to the Mg(2+) site. Residues 159–164 (YIEYSG), Gly189, and 209–210 (GD) each bind sn-glycerol 1-phosphate.

It belongs to the GGGP/HepGP synthase family. Group I subfamily. As to quaternary structure, homodimer. Requires Mg(2+) as cofactor.

The catalysed reaction is sn-glycerol 1-phosphate + all-trans-heptaprenyl diphosphate = 3-heptaprenyl-sn-glycero-1-phosphate + diphosphate. Its pathway is membrane lipid metabolism; glycerophospholipid metabolism. In terms of biological role, prenyltransferase that catalyzes in vivo the transfer of the heptaprenyl moiety of heptaprenyl pyrophosphate (HepPP; 35 carbon atoms) to the C3 hydroxyl of sn-glycerol-1-phosphate (G1P), producing heptaprenylglyceryl phosphate (HepGP). This reaction is an ether-bond-formation step in the biosynthesis of archaea-type G1P-based membrane lipids found in Bacillales. The sequence is that of Heptaprenylglyceryl phosphate synthase from Staphylococcus aureus (strain USA300).